A 623-amino-acid chain; its full sequence is Chaperone protein DnaK (623 aa).

Positions 582–603 are enriched in low complexity; that stretch reads QQQQAAEQAAQQQSGGQQASGS. Residues 582-623 are disordered; that stretch reads QQQQAAEQAAQQQSGGQQASGSNPGKDPNVVDADYEVVNDKK. Residues 614–623 show a composition bias toward acidic residues; that stretch reads ADYEVVNDKK.

This sequence belongs to the heat shock protein 70 family.

In terms of biological role, acts as a chaperone. In Methanocella arvoryzae (strain DSM 22066 / NBRC 105507 / MRE50), this protein is Chaperone protein DnaK.